A 147-amino-acid polypeptide reads, in one-letter code: Antiholin-like protein LrgA (147 aa).

A run of 4 helical transmembrane segments spans residues 12–32 (PAHF…SKII), 35–55 (FMPI…VLLC), 74–94 (NIGL…GVIS), and 98–118 (FLII…TGYV).

The protein belongs to the CidA/LrgA family. LrgA subfamily.

The protein localises to the cell membrane. Its function is as follows. Inhibits the expression or activity of extracellular murein hydrolases by interacting, possibly with LrgB, with the holin-like proteins CidA and/or CidB. The LrgAB and CidAB proteins may affect the proton motive force of the membrane. May be involved in programmed cell death (PCD), possibly triggering PCD in response to antibiotics and environmental stresses. The protein is Antiholin-like protein LrgA of Staphylococcus aureus (strain USA300).